Reading from the N-terminus, the 206-residue chain is Protein-methionine-sulfoxide reductase heme-binding subunit MsrQ (206 aa).

Transmembrane regions (helical) follow at residues 10–30 (VFIAAAVWPLFWLYEAWSAVL), 42–62 (LGLGTLILLLITLAMTPLQKL), 75–95 (LGLWCFAYVVLHLAAYCVFVL), 110–130 (PYIIVGALGFLLLLVLAVTSN), 147–167 (LVYVVLGLGLLHMLWIVRADL), and 169–189 (EWAIYASIGALLLVLRIPPVM).

This sequence belongs to the MsrQ family. In terms of assembly, heterodimer of a catalytic subunit (MsrP) and a heme-binding subunit (MsrQ). FMN is required as a cofactor. It depends on heme b as a cofactor.

Its subcellular location is the cell inner membrane. Part of the MsrPQ system that repairs oxidized periplasmic proteins containing methionine sulfoxide residues (Met-O), using respiratory chain electrons. Thus protects these proteins from oxidative-stress damage caused by reactive species of oxygen and chlorine generated by the host defense mechanisms. MsrPQ is essential for the maintenance of envelope integrity under bleach stress, rescuing a wide series of structurally unrelated periplasmic proteins from methionine oxidation. MsrQ provides electrons for reduction to the reductase catalytic subunit MsrP, using the quinone pool of the respiratory chain. This is Protein-methionine-sulfoxide reductase heme-binding subunit MsrQ from Pseudomonas fluorescens (strain SBW25).